Reading from the N-terminus, the 231-residue chain is MSIPLLNYSLSTQNQRVDGYEVSPGEEQPRAYNTDNLPSAVEMDEVIWAAYRQIFSEHQILSSTSAPYLESQLRFNQIKVKDFIKGLILSESFRKLNYDVNNNYRFVEICVQRILGRDVYNEREKLAWSIVIASKGLESFINMLIESDEYEENFGDSIVPYQRRRIIAQRSKGEMPFNLKTPRYGADFKEKFGMPQFIWQGPVRQFRPQEQRPKAGDPALFLGMVNDLATV.

Residues 11-191 (STQNQRVDGY…PRYGADFKEK (181 aa)) form the PBS-linker domain.

The protein belongs to the phycobilisome linker protein family. In terms of assembly, the phycobilisome is a hemidiscoidal structure that is composed of two distinct substructures: a core complex and a number of rods radiating from the core.

The protein resides in the plastid. It is found in the chloroplast. It localises to the chloroplast thylakoid membrane. Its function is as follows. Rod-core linker protein required for attachment of phycocyanin to allophycocyanin in cores of phycobilisomes. Functionally, linker polypeptides determine the state of aggregation and the location of the disk-shaped phycobiliprotein units within the phycobilisome and modulate their spectroscopic properties in order to mediate a directed and optimal energy transfer. The protein is Phycobilisome rod-core linker polypeptide cpcG (cpcG) of Porphyra purpurea (Red seaweed).